The following is a 323-amino-acid chain: G patch domain-containing protein 4 (323 aa).

Disordered stretches follow at residues 1–32, 84–110, 124–185, and 197–323; these read MSAS…GLGR, GVKV…SNRN, PGGE…SAKL, and AKYG…NKSE. Basic and acidic residues-rich tracts occupy residues 9 to 32 and 84 to 94; these read SQGR…GLGR and GVKVNRTKDDD. Residues 11–57 form the G-patch domain; that stretch reads GRRFAEQQMHKHGWTEGKGLGRRENGISEAIKVKVKCDHAGVGHNSA. The span at 131-141 shows a compositional bias: low complexity; the sequence is KEPSSSESSDS. Residues 252–261 show a composition bias toward acidic residues; it reads EREEEEEEES. Basic residues predominate over residues 281–291; sequence SKKKKSKKKHR. Polar residues predominate over residues 294 to 306; that stretch reads SASPQEEQVTEST. The span at 311-323 shows a compositional bias: basic residues; the sequence is KPKKKKKKKNKSE.

The sequence is that of G patch domain-containing protein 4 (gpatch4) from Xenopus tropicalis (Western clawed frog).